A 104-amino-acid chain; its full sequence is Replication restart protein PriB (104 aa).

An SSB domain is found at 1–101 (MTNRLELSGI…LHAEQIELID (101 aa)).

It belongs to the PriB family. In terms of assembly, homodimer. Interacts with DnaT. Interacts with PriA. Component of the replication restart primosome. Primosome assembly occurs via a 'hand-off' mechanism. PriA binds to replication forks, subsequently PriB then DnaT bind; DnaT then displaces ssDNA to generate the helicase loading substrate.

Involved in the restart of stalled replication forks, which reloads the replicative helicase on sites far from the origin of replication; the PriA-PriB pathway is the major replication restart pathway. During primosome assembly it facilitates complex formation between PriA and DnaT on DNA; stabilizes PriA on DNA. Stimulates the DNA unwinding activity of PriA helicase. In terms of biological role, binds single-stranded (ss)DNA at the primosome assembly site (PAS). One study finds it binds 15 nucleotide (nt) ssDNA. Another study finds the minimal ssDNA length for binding to PriB is 25 nt; prefers dT(30) over dA(30). Also binds 22 nt dsDNA. This is Replication restart protein PriB from Klebsiella pneumoniae subsp. pneumoniae (strain ATCC 700721 / MGH 78578).